Reading from the N-terminus, the 474-residue chain is Cytochrome c-552 (474 aa).

The signal sequence occupies residues 1-29; that stretch reads MSIKHWMASSVSVTALVMTALLNITAVSA. His91 contributes to the heme c binding site. The heme site is built by Cys119, Cys122, and Lys123. Cys157, Cys160, His161, Cys206, Cys209, and His210 together coordinate heme c. Ca(2+)-binding residues include Glu212, Tyr213, Lys258, and Gln260. Position 213 (Tyr213) interacts with substrate. His261 is a substrate binding site. Residues His272, Cys279, Cys282, His283, His298, Cys311, Cys314, His315, and His390 each contribute to the heme c site.

The protein belongs to the cytochrome c-552 family. The cofactor is Ca(2+). Requires heme c as cofactor.

It localises to the periplasm. It carries out the reaction 6 Fe(III)-[cytochrome c] + NH4(+) + 2 H2O = 6 Fe(II)-[cytochrome c] + nitrite + 8 H(+). The protein operates within nitrogen metabolism; nitrate reduction (assimilation). Catalyzes the reduction of nitrite to ammonia, consuming six electrons in the process. In Vibrio vulnificus (strain CMCP6), this protein is Cytochrome c-552.